A 369-amino-acid chain; its full sequence is Porin-like protein BUsg_347 (369 aa).

The first 23 residues, 1–23, serve as a signal peptide directing secretion; sequence MKNHKSLAILIPMLFAGSTAVNA.

The protein belongs to the Gram-negative porin family. Homotrimer.

Its subcellular location is the cell outer membrane. Its function is as follows. Forms pores that allow passive diffusion of small molecules across the membrane. The polypeptide is Porin-like protein BUsg_347 (Buchnera aphidicola subsp. Schizaphis graminum (strain Sg)).